Here is a 152-residue protein sequence, read N- to C-terminus: Inner membrane protein YbbJ (152 aa).

Residues 1–21 (MMELMVVHPHIFWLSLGGLLL) form a helical membrane-spanning segment. The Cytoplasmic portion of the chain corresponds to 22–31 (AAEMLGGNGY). A helical transmembrane segment spans residues 32–52 (LLWSGVAAVITGLVVWLVPLG). Residues 53 to 54 (WE) lie on the Periplasmic side of the membrane. The chain crosses the membrane as a helical span at residues 55 to 75 (WQGVMFAILTLLAAWLWWKWL). At 76 to 152 (SRRVREQKHS…ITLHIRAVSS (77 aa)) the chain is on the cytoplasmic side.

This sequence to M.jannaschii MJ0826.

The protein resides in the cell inner membrane. The chain is Inner membrane protein YbbJ (ybbJ) from Escherichia coli (strain K12).